The primary structure comprises 317 residues: MENKIKVVFCGTPKIGADVLKALIEMNEVEVVLVISQPDKPIGRKKQIVYTPVKKLALENNLKVVQPNKIGEIYDDLAKLEFDFLITCAFGQFIPTKILKLAKTDSINFHGSLLPKLRGGAPIQYAIKNGDKKTGITIMQMVKQMDAGDYYVQESIDILDSDDSGSLFEKMGQLAYSMCKKYLVDIYNHKFELIKQNENEVTFCKNISSEEEKIDWNNTSLDIFNLIRSLSPSPISYTTINSQRYKIKSSKIINLDNQNKNVAPGTIIDINRQGIVVKTLDSSLLILEIQKEGKKMILASNYYLNKLSDLKISDKFD.

112–115 lines the (6S)-5,6,7,8-tetrahydrofolate pocket; that stretch reads SLLP.

This sequence belongs to the Fmt family.

The catalysed reaction is L-methionyl-tRNA(fMet) + (6R)-10-formyltetrahydrofolate = N-formyl-L-methionyl-tRNA(fMet) + (6S)-5,6,7,8-tetrahydrofolate + H(+). Its function is as follows. Attaches a formyl group to the free amino group of methionyl-tRNA(fMet). The formyl group appears to play a dual role in the initiator identity of N-formylmethionyl-tRNA by promoting its recognition by IF2 and preventing the misappropriation of this tRNA by the elongation apparatus. This Mycoplasma capricolum subsp. capricolum (strain California kid / ATCC 27343 / NCTC 10154) protein is Methionyl-tRNA formyltransferase.